The following is a 283-amino-acid chain: Extracellular metalloprotease MGG_08041 (283 aa).

An N-terminal signal peptide occupies residues 1 to 22; that stretch reads MQINVVKTFLFALAASSVSALA. The N-linked (GlcNAc...) asparagine glycan is linked to Asn-55. His-197 provides a ligand contact to Zn(2+). The active site involves Glu-198. His-201 is a binding site for Zn(2+). A disulfide bridge connects residues Cys-233 and Cys-260.

It belongs to the peptidase M43B family.

It localises to the secreted. Functionally, secreted metalloproteinase that allows assimilation of proteinaceous substrates. The polypeptide is Extracellular metalloprotease MGG_08041 (Pyricularia oryzae (strain 70-15 / ATCC MYA-4617 / FGSC 8958) (Rice blast fungus)).